Here is a 122-residue protein sequence, read N- to C-terminus: Large ribosomal subunit protein uL14 (122 aa).

Belongs to the universal ribosomal protein uL14 family. In terms of assembly, part of the 50S ribosomal subunit. Forms a cluster with proteins L3 and L19. In the 70S ribosome, L14 and L19 interact and together make contacts with the 16S rRNA in bridges B5 and B8.

In terms of biological role, binds to 23S rRNA. Forms part of two intersubunit bridges in the 70S ribosome. In Delftia acidovorans (strain DSM 14801 / SPH-1), this protein is Large ribosomal subunit protein uL14.